Consider the following 163-residue polypeptide: Phosphopantetheine adenylyltransferase (163 aa).

Residue Thr11 coordinates substrate. Residues 11–12 (TF) and His19 each bind ATP. Substrate is bound by residues Lys43, Leu75, and Arg89. Residues 90 to 92 (GLR), Glu100, and 125 to 131 (YSFISST) contribute to the ATP site.

This sequence belongs to the bacterial CoaD family. In terms of assembly, homohexamer. It depends on Mg(2+) as a cofactor.

It is found in the cytoplasm. It catalyses the reaction (R)-4'-phosphopantetheine + ATP + H(+) = 3'-dephospho-CoA + diphosphate. It participates in cofactor biosynthesis; coenzyme A biosynthesis; CoA from (R)-pantothenate: step 4/5. In terms of biological role, reversibly transfers an adenylyl group from ATP to 4'-phosphopantetheine, yielding dephospho-CoA (dPCoA) and pyrophosphate. This chain is Phosphopantetheine adenylyltransferase, found in Acinetobacter baumannii (strain SDF).